A 439-amino-acid polypeptide reads, in one-letter code: Protein pop-1 (439 aa).

The interval Met1–Asp38 is disordered. Over residues Asp9–Glu18 the composition is skewed to basic and acidic residues. The involved in nuclear asymmetry stretch occupies residues Ser87–Phe138. Residue Ser125 is modified to Phosphoserine; by LIT1. The HMG box DNA-binding region spans Ile199–Ser269. Positions Ala254–Tyr265 are enriched in basic and acidic residues. Disordered stretches follow at residues Ala254 to Gln298, Arg329 to Asn365, and Ser385 to Leu439. Positions Asn277–Asp286 are enriched in basic residues. Composition is skewed to low complexity over residues Gly346–Asn365 and Ser385–Ser400. Acidic residues predominate over residues Ser409–Asp420. The span at Thr422–Leu439 shows a compositional bias: polar residues.

The protein belongs to the TCF/LEF family. As to quaternary structure, interacts with hda-1. Interacts with bar-1. Interacts with par-5; the interaction is direct and is enhanced by lit-1-mediated pop-1 phosphorylation. The interaction also leads to the subsequent nuclear export of pop-1. Interacts (when phosphorylated on Ser-125) with lit-1; the interaction is dependent on the beta-catenin-lit-1 complex. Interacts with wrm-1. In terms of processing, phosphorylated on Ser-125 by lit-1 in the beta-catenin-lit-1 complex. Phosphorylation promotes the interaction of pop-1 and par-5 and the subsequent translocation of pop-1 from the nucleus to the cytoplasm.

Its subcellular location is the nucleus. It localises to the cytoplasm. Its function is as follows. Part of the Wnt signaling pathway essential for the specification of the mesodermal cell fate in early embryos. Required for asymmetrical division of somatic gonadal precursor descendants which initiate axis formation required to control organ shape. Similarly, involved in asymmetrical division of seam cells, a stem cell-like lineage. Represses expression of target genes via its interaction with hda-1 histone deacetylase. Required for specification of the M lineage-derived coelomocyte and sex myoblast fate. Regulates coelomocyte fate by positively regulating proliferation and ceh-34 and possibly eya-1 expression in M.dlpa and M.drpa precursors. This is Protein pop-1 from Caenorhabditis briggsae.